Consider the following 1135-residue polypeptide: Exportin-5 (1135 aa).

One can recognise an Importin N-terminal domain in the interval 32–117 (SQVFLEEIKT…KEKLVTILVD (86 aa)). The pre-siRNA binding stretch occupies residues 630 to 631 (TE).

It belongs to the exportin family. Found in a nuclear export complex with RanGTP, exportin and pre-miRNA.

Its subcellular location is the nucleus. The protein resides in the cytoplasm. In terms of biological role, mediates the nuclear export of proteins bearing a double-stranded RNA binding domain (dsRBD) and double-stranded RNAs (cargos). Functionally, mediates the nuclear export of micro-RNA precursors, which form short hairpins. This chain is Exportin-5 (xpo5), found in Dictyostelium discoideum (Social amoeba).